Here is a 330-residue protein sequence, read N- to C-terminus: GTPase Obg (330 aa).

The Obg domain occupies 1–159 (MHFIDEVKIY…MWIHLSLKLL (159 aa)). Residues 160–327 (SDVGLVGFPN…IVKLALETIK (168 aa)) enclose the OBG-type G domain. GTP is bound by residues 166 to 173 (GFPNAGKS), 191 to 195 (FTTLV), 212 to 215 (DIPG), 279 to 282 (NKCD), and 308 to 310 (STY). Residues serine 173 and threonine 193 each coordinate Mg(2+).

The protein belongs to the TRAFAC class OBG-HflX-like GTPase superfamily. OBG GTPase family. Monomer. The cofactor is Mg(2+).

The protein localises to the cytoplasm. Its function is as follows. An essential GTPase which binds GTP, GDP and possibly (p)ppGpp with moderate affinity, with high nucleotide exchange rates and a fairly low GTP hydrolysis rate. Plays a role in control of the cell cycle, stress response, ribosome biogenesis and in those bacteria that undergo differentiation, in morphogenesis control. The protein is GTPase Obg of Rickettsia massiliae (strain Mtu5).